The primary structure comprises 206 residues: MATQETTPGSQTEESNALDLPSAYDIRDYVLQRPSQQTNSEAFSSEEACSIPCSSDVDPDSSNLNTEQNDSWTSENFWFYPSVKGQPETKEEDDGLRKSLDKFYEVFGNPQPASGNSLSTSVCQCLSQKINELKDQENQTYTLRSFQMARVIFNQNGCSILQKHSRDAHFYPVREGSTSLQDEKLTPGLSKDIIHFLLQQNLMKDQ.

Composition is skewed to polar residues over residues 1 to 15, 33 to 43, and 60 to 69; these read MATQETTPGSQTEES, RPSQQTNSEAF, and DSSNLNTEQN. 2 disordered regions span residues 1–21 and 33–69; these read MATQETTPGSQTEESNALDLP and RPSQQTNSEAFSSEEACSIPCSSDVDPDSSNLNTEQN.

Component of the shieldin complex, consisting of SHLD1, SHLD2, SHLD3 and MAD2L2/REV7. Within the complex, SHLD2 forms a scaffold which interacts with a SHLD3-MAD2L2 subcomplex via its N-terminus, and with SHLD1 via its C-terminus. Interacts with ASTE1.

It localises to the chromosome. Its function is as follows. Component of the shieldin complex, which plays an important role in repair of DNA double-stranded breaks (DSBs). During G1 and S phase of the cell cycle, the complex functions downstream of TP53BP1 to promote non-homologous end joining (NHEJ) and suppress DNA end resection. Mediates various NHEJ-dependent processes including immunoglobulin class-switch recombination, and fusion of unprotected telomeres. The protein is Shieldin complex subunit 1 of Bos taurus (Bovine).